A 154-amino-acid chain; its full sequence is Probable transport accessory protein MmpS4 (154 aa).

A run of 2 helical transmembrane segments spans residues 19-39 and 97-117; these read IWIP…VYRV and QLPW…NLVA.

The protein belongs to the MmpS family.

The protein localises to the cell membrane. This Mycobacterium leprae (strain TN) protein is Probable transport accessory protein MmpS4.